Reading from the N-terminus, the 1472-residue chain is Adhesion G protein-coupled receptor L1 (1472 aa).

An N-terminal signal peptide occupies residues 1-24; it reads MARLAAVLWSLCVTAILVTSATQG. The Extracellular segment spans residues 25 to 857; the sequence is LSRAGLPFGL…EIYQGRINEL (833 aa). An SUEL-type lectin domain is found at 40–129; that stretch reads ACEGYPIELR…KYLEVQYDCV (90 aa). 5 cysteine pairs are disulfide-bonded: Cys-41–Cys-71, Cys-50–Cys-128, Cys-83–Cys-115, Cys-96–Cys-102, and Cys-140–Cys-322. Glu-42 contributes to the alpha-L-rhamnose binding site. Asn-98 carries an N-linked (GlcNAc...) asparagine glycan. Alpha-L-rhamnose is bound at residue 117 to 120; the sequence is GTYK. In terms of domain architecture, Olfactomedin-like spans 139–398; it reads VCPGTLQKVL…VVRYSLEFGP (260 aa). The tract at residues 400–468 is disordered; the sequence is DPSAGPATSP…APAPSTRRPP (69 aa). The segment covering 405-441 has biased composition (low complexity); sequence PATSPPLSTTTTARPTPLTSTASPAATTPLRRAPLTT. Pro residues predominate over residues 453 to 468; that stretch reads DLPPATAPAPSTRRPP. 2 disulfides stabilise this stretch: Cys-480-Cys-515 and Cys-503-Cys-532. N-linked (GlcNAc...) asparagine glycans are attached at residues Asn-531, Asn-640, Asn-741, Asn-800, Asn-805, and Asn-826. In terms of domain architecture, GAIN-B spans 669–850; sequence PARFLAAKQN…AVLMAHREIY (182 aa). Disulfide bonds link Cys-801–Cys-832 and Cys-820–Cys-834. Residues 801–850 are GPS; it reads CSFWNYSERSMLGYWSTQGCRLVESNKTHTTCACSHLTNFAVLMAHREIY. A helical membrane pass occupies residues 858–878; it reads LLSVITWVGIVISLVCLAICI. Topologically, residues 879-892 are cytoplasmic; that stretch reads STFCFLRGLQTDRN. The chain crosses the membrane as a helical span at residues 893 to 913; it reads TIHKNLCINLFLAELLFLVGI. Residues 914 to 919 are Extracellular-facing; it reads DKTQYE. Residues 920–940 traverse the membrane as a helical segment; the sequence is IACPIFAGLLHYFFLAAFSWL. The Cytoplasmic segment spans residues 941-963; that stretch reads CLEGVHLYLLLVEVFESEYSRTK. Residues 964-984 traverse the membrane as a helical segment; sequence YYYLGGYCFPALVVGIAAAID. Over 985–1001 the chain is Extracellular; it reads YRSYGTEKACWLRVDNY. Residues 1002–1022 traverse the membrane as a helical segment; the sequence is FIWSFIGPVSFVIVVNLVFLM. Residues 1023–1049 are Cytoplasmic-facing; sequence VTLHKMVRSSSVLKPDSSRLDNIKSWA. The helical transmembrane segment at 1050–1070 threads the bilayer; the sequence is LGAIALLFLLGLTWAFGLLFI. Over 1071–1074 the chain is Extracellular; that stretch reads NKES. A helical transmembrane segment spans residues 1075–1095; sequence VVMAYLFTTFNAFQGVFIFVF. Residues 1096–1472 are Cytoplasmic-facing; the sequence is HCALQKKVHK…DGQMQLVTSL (377 aa). At Arg-1193 the chain carries Omega-N-methylarginine. A Phosphoserine modification is found at Ser-1219. Disordered regions lie at residues 1247–1271, 1291–1325, 1358–1427, and 1449–1472; these read FNNSYSLRSGDFPPGDGAPEPPRGR, NLRGGSSGAKGPPPPEPPVPPVPGGSGEEEAGGPG, ESES…SRPP, and YLAAPGLEGPGPDGDGQMQLVTSL. Pro residues-rich tracts occupy residues 1301 to 1313 and 1406 to 1418; these read GPPPPEPPVPPVP and ALPPPPPAPPGPP. Ser-1471 carries the post-translational modification Phosphoserine.

This sequence belongs to the G-protein coupled receptor 2 family. Adhesion G-protein coupled receptor (ADGR) subfamily. In terms of assembly, forms a heterodimer, consisting of a large extracellular region (p120) non-covalently linked to a seven-transmembrane moiety (p85). Interacts with syntaxin and with proteins of the SHANK family via the PDZ domain. Interacts (via extracellular domain) with FLRT1, FLRT2 and FLRT3 (via extracellular domain). In terms of processing, autoproteolytically cleaved into 2 subunits, an extracellular subunit and a seven-transmembrane subunit. This proteolytic processing takes place early in the biosynthetic pathway, either in the endoplasmic reticulum or in the early compartment of the Golgi apparatus. Brain-specific expression but low levels are also detected in kidney, lung and spleen.

Its subcellular location is the cell membrane. It is found in the cell projection. It localises to the axon. The protein localises to the growth cone. The protein resides in the synapse. Its subcellular location is the presynaptic cell membrane. It is found in the synaptosome. Calcium-independent receptor of high affinity for alpha-latrotoxin, an excitatory neurotoxin present in black widow spider venom which triggers massive exocytosis from neurons and neuroendocrine cells. Receptor for TENM2 that mediates heterophilic synaptic cell-cell contact and postsynaptic specialization. Receptor probably implicated in the regulation of exocytosis. The polypeptide is Adhesion G protein-coupled receptor L1 (Bos taurus (Bovine)).